We begin with the raw amino-acid sequence, 404 residues long: MSPSDVPINWKRNLTVTWLGCFLTGAAFSLVMPFLPLYVEQLGVTGHSALNMWSGLVFSITFLFSAIASPFWGGLADRKGRKIMLLRSALGMAIVMLLMGMAQNIWQFLILRALLGLLGGFIPNANALIATQVPRHKSGWALGTLSTGGVSGALLGPLAGGLLADHYGLRPVFFITASVLFICFLLTFFFIHENFLPVSKKEMLHVREVVASLKNPRLVLSLFVTTLIIQVATGSIAPILTLYVRELAGDVSNIAFISGMIASVPGVAALLSAPRLGKLGDRIGPEKILIVALIISVLLLIPMSFVQTPWQLALLRFLLGAADGALLPAVQTLLVYNSTNQIAGRIFSYNQSFRDIGNVTGPLMGAAISASYGFRAVFCVTAGVVLFNAIYSWNSLRRRRLAIE.

Transmembrane regions (helical) follow at residues 19–39, 56–76, 90–110, 113–133, 144–164, 171–191, 222–242, 254–274, 288–308, 317–337, and 376–396; these read LGCFLTGAAFSLVMPFLPLYV, LVFSITFLFSAIASPFWGGLA, LGMAIVMLLMGMAQNIWQFLI, ALLGLLGGFIPNANALIATQV, TLSTGGVSGALLGPLAGGLLA, PVFFITASVLFICFLLTFFFI, LFVTTLIIQVATGSIAPILTL, IAFISGMIASVPGVAALLSAP, ILIVALIISVLLLIPMSFVQT, FLLGAADGALLPAVQTLLVYN, and AVFCVTAGVVLFNAIYSWNSL.

This sequence belongs to the major facilitator superfamily. DHA1 family. MdtG (TC 2.A.1.2.20) subfamily.

The protein resides in the cell inner membrane. The protein is Multidrug resistance protein MdtG of Salmonella dublin (strain CT_02021853).